The following is a 303-amino-acid chain: Acetylglutamate kinase (303 aa).

Residues 67–68 (GG), Arg-89, and Asn-193 contribute to the substrate site.

It belongs to the acetylglutamate kinase family. ArgB subfamily.

It localises to the cytoplasm. The enzyme catalyses N-acetyl-L-glutamate + ATP = N-acetyl-L-glutamyl 5-phosphate + ADP. The protein operates within amino-acid biosynthesis; L-arginine biosynthesis; N(2)-acetyl-L-ornithine from L-glutamate: step 2/4. Functionally, catalyzes the ATP-dependent phosphorylation of N-acetyl-L-glutamate. This is Acetylglutamate kinase from Acinetobacter baylyi (strain ATCC 33305 / BD413 / ADP1).